Reading from the N-terminus, the 901-residue chain is MSYKVIVPATVLPPWLRVGENWIFARHRRTEVGVVLPANTKFRVRADFSRAGFTRPVIVRLLNNNRNTEREINLNNDQWMEVEHAHESVPFVDWPVGERNIMAEVYFEIDGPHIPLPVYVFNTRPVEHFKSEYRQSSSGYCFLYLDLVCMLVPPASKNALLDVNIFELHQFYNEIINYYDDLCGLVEDPYADTVDSNLPNKAAFVKADAGGPGGAYYGPFWTAPASSNLGDYLRISPTNWMVIHELGHAYDFVFTVNTILIEIWNNSLCDRIQYKWMNKTKRQQLARVYENRRPQKEATIQALIDNNSPFDNWGFFERLIIFTWLYNPQRGLDTLRNINHSYRVHATRNSSIPYPQIWSWLTTSAYDNFWLYFNLVGVYPADFYVNEHNKVVHFNLHLRALALGQSVRYPIKYIITDFDLVSKNYDIKQYLESNFDLVIPEELRQTDLLADVRVVCVIDDPSQIVGEPFSVYDGNERVFESTVATDGNMYLVGVGPGVYTLRAPRGKNKRYKLHLAHSPREPVHPANDHMYLLVTYPYYNQTLTYTPYVNSDLAVDMAHLFGSNDRRYVATIYFNPFEQTVTVHLNNIRAGRENNTTLYFEMVISNPFNGQSQTFTILEDNPTLRQGYYKFDVVTYSSIRLNMSVAGRLLFGDTFLPEGTTTLTMFPNQVLEPNLFPDGSALNRTLARLREQAAFLDNYSQLMYIENELRDSIYLASQLVDPASDEFVKYYPDYFRDPHTYVYLFRFRGLGDFVLLDLQIVPLLNLATVRIANNHNGPHSYFDTLYFKVELRDTNGAIVFSYSRRGNEPMTPEHHKFEVYSGYTVELFMREPGNRLQLIVNKMLDTALPSTQNIFARITDTQLVVGDTSIEDNLVTSINVDCGDDDNQKIRVVETLKMIAF.

The Peptidase M60 domain occupies 27–330 (HRRTEVGVVL…IFTWLYNPQR (304 aa)). N-linked (GlcNAc...) asparagine; by host glycans are attached at residues N265, N278, N339, N349, N540, N594, N595, N642, N683, and N698.

Its function is as follows. Involved in disruption of the peritrophic membrane and fusion of nucleocapsids with midgut cells. The sequence is that of Viral-enhancing factor (VEF) from Pseudalatia unipuncta granulosis virus (PuGV).